The following is a 234-amino-acid chain: Urease accessory protein UreF (234 aa).

This sequence belongs to the UreF family. In terms of assembly, ureD, UreF and UreG form a complex that acts as a GTP-hydrolysis-dependent molecular chaperone, activating the urease apoprotein by helping to assemble the nickel containing metallocenter of UreC. The UreE protein probably delivers the nickel.

It is found in the cytoplasm. Required for maturation of urease via the functional incorporation of the urease nickel metallocenter. The polypeptide is Urease accessory protein UreF (Kocuria rhizophila (strain ATCC 9341 / DSM 348 / NBRC 103217 / DC2201)).